A 320-amino-acid chain; its full sequence is MAAHYLDFERPIADLESKIEELSRLSETAGPGAFDTEIQALRDRAQELRKEAYANLDAWQKTMVARHPQRPHLRDYVAGLIDEFVELRGDRKFADDQAIVGGLGRFRGQPVVVMGHEKGHDTTTRLKHNFGMARPEGYRKAVRLMDMAERFNLPVITFVDTAGAYPGLGAEERGQAEAIARSTERCLTLGVPMVATIVGEGGSGGAIALAGANRVLILEHSIYSVISPEGAASILWRDGARAKDAATQMRITAQDLIKLGIVDRIVEEPAGGAHSDTEAAIQAVGDAVEDELKAMAAMSPAELKKQRSDRFYAIGRAGLQ.

One can recognise a CoA carboxyltransferase C-terminal domain in the interval 33-294 (AFDTEIQALR…GDAVEDELKA (262 aa)).

This sequence belongs to the AccA family. Acetyl-CoA carboxylase is a heterohexamer composed of biotin carboxyl carrier protein (AccB), biotin carboxylase (AccC) and two subunits each of ACCase subunit alpha (AccA) and ACCase subunit beta (AccD).

Its subcellular location is the cytoplasm. The enzyme catalyses N(6)-carboxybiotinyl-L-lysyl-[protein] + acetyl-CoA = N(6)-biotinyl-L-lysyl-[protein] + malonyl-CoA. It functions in the pathway lipid metabolism; malonyl-CoA biosynthesis; malonyl-CoA from acetyl-CoA: step 1/1. Component of the acetyl coenzyme A carboxylase (ACC) complex. First, biotin carboxylase catalyzes the carboxylation of biotin on its carrier protein (BCCP) and then the CO(2) group is transferred by the carboxyltransferase to acetyl-CoA to form malonyl-CoA. The chain is Acetyl-coenzyme A carboxylase carboxyl transferase subunit alpha from Caulobacter vibrioides (strain ATCC 19089 / CIP 103742 / CB 15) (Caulobacter crescentus).